The chain runs to 447 residues: Tubulin beta-1 chain (447 aa).

Residues glutamine 11, glutamate 69, serine 138, glycine 142, threonine 143, glycine 144, asparagine 204, and asparagine 226 each coordinate GTP. Glutamate 69 lines the Mg(2+) pocket. The segment at 428–447 (ATADEDAEFDEEQEQEIEDN) is disordered. Residues 429–447 (TADEDAEFDEEQEQEIEDN) show a composition bias toward acidic residues.

This sequence belongs to the tubulin family. As to quaternary structure, dimer of alpha and beta chains. A typical microtubule is a hollow water-filled tube with an outer diameter of 25 nm and an inner diameter of 15 nM. Alpha-beta heterodimers associate head-to-tail to form protofilaments running lengthwise along the microtubule wall with the beta-tubulin subunit facing the microtubule plus end conferring a structural polarity. Microtubules usually have 13 protofilaments but different protofilament numbers can be found in some organisms and specialized cells. It depends on Mg(2+) as a cofactor.

It is found in the cytoplasm. It localises to the cytoskeleton. Its function is as follows. Tubulin is the major constituent of microtubules, a cylinder consisting of laterally associated linear protofilaments composed of alpha- and beta-tubulin heterodimers. Microtubules grow by the addition of GTP-tubulin dimers to the microtubule end, where a stabilizing cap forms. Below the cap, tubulin dimers are in GDP-bound state, owing to GTPase activity of alpha-tubulin. The chain is Tubulin beta-1 chain from Manduca sexta (Tobacco hawkmoth).